We begin with the raw amino-acid sequence, 541 residues long: Beta-glucuronidase (541 aa).

The N-terminal stretch at 1–20 (MHHHPITLLSLLLGAAQSIA) is a signal peptide. N-linked (GlcNAc...) asparagine glycans are attached at residues Asn69, Asn115, and Asn157. The Proton donor role is filled by Glu208. Residues Asn217, Asn291, and Asn304 are each glycosylated (N-linked (GlcNAc...) asparagine). Glu324 functions as the Nucleophile in the catalytic mechanism. N-linked (GlcNAc...) asparagine glycans are attached at residues Asn380, Asn426, Asn441, Asn483, and Asn512.

The protein belongs to the glycosyl hydrolase 79 family. Post-translationally, N-glycosylated.

Its subcellular location is the secreted. The catalysed reaction is a beta-D-glucuronoside + H2O = D-glucuronate + an alcohol. Beta-glucuronidase that hydrolyzes beta-glucuronosyl and 4-O-methyl-beta-glucuronosyl residues of arabinogalactan-protein. Hydrolyzed heparan sulfate only very weakly. Has no activity on xylan from birchwood. Able to catalyze the transglycosylation of glucuronic acid (GlcA) residues from p-nitrophenyl-beta-glucuronic acid (PNP beta-GlcA) to various monosaccharide acceptors such as glucose, galactose and xylose. In Aspergillus niger (strain ATCC MYA-4892 / CBS 513.88 / FGSC A1513), this protein is Beta-glucuronidase.